The chain runs to 238 residues: Probable transcriptional regulatory protein IL0164 (238 aa).

It belongs to the TACO1 family.

The protein localises to the cytoplasm. The sequence is that of Probable transcriptional regulatory protein IL0164 from Idiomarina loihiensis (strain ATCC BAA-735 / DSM 15497 / L2-TR).